The following is a 208-amino-acid chain: MIGKLKGIVDSYGEDFVILDVNGVGYVVHCSARTLQRLPKPGEATDLAIETHVREDMIRLYGFRSDAEREWFRLLQTVQGVGTRVALGVLSVLEPAQLATAIATGDKGAVARAPGVGPRLAARLVAELKDKAPAFAPVDPALVALTGAVEDRTAPQPVADAISALVNLGYPQVQASAAIAAALKGLGDGAETVEAKTLIRLGLRELAR.

The tract at residues methionine 1 to arginine 64 is domain I. A domain II region spans residues serine 65–valine 143. The flexible linker stretch occupies residues alanine 144 to arginine 152. The interval threonine 153 to arginine 208 is domain III.

It belongs to the RuvA family. As to quaternary structure, homotetramer. Forms an RuvA(8)-RuvB(12)-Holliday junction (HJ) complex. HJ DNA is sandwiched between 2 RuvA tetramers; dsDNA enters through RuvA and exits via RuvB. An RuvB hexamer assembles on each DNA strand where it exits the tetramer. Each RuvB hexamer is contacted by two RuvA subunits (via domain III) on 2 adjacent RuvB subunits; this complex drives branch migration. In the full resolvosome a probable DNA-RuvA(4)-RuvB(12)-RuvC(2) complex forms which resolves the HJ.

It is found in the cytoplasm. Its function is as follows. The RuvA-RuvB-RuvC complex processes Holliday junction (HJ) DNA during genetic recombination and DNA repair, while the RuvA-RuvB complex plays an important role in the rescue of blocked DNA replication forks via replication fork reversal (RFR). RuvA specifically binds to HJ cruciform DNA, conferring on it an open structure. The RuvB hexamer acts as an ATP-dependent pump, pulling dsDNA into and through the RuvAB complex. HJ branch migration allows RuvC to scan DNA until it finds its consensus sequence, where it cleaves and resolves the cruciform DNA. This chain is Holliday junction branch migration complex subunit RuvA, found in Methylorubrum populi (strain ATCC BAA-705 / NCIMB 13946 / BJ001) (Methylobacterium populi).